Consider the following 154-residue polypeptide: UPF0547 protein C16orf87 homolog (154 aa).

The disordered stretch occupies residues 43–119 (NAKHSEKSPP…KHEEEREKQE (77 aa)). Basic and acidic residues predominate over residues 68-84 (VRREKINSTVNKDLENR). Residue serine 91 is modified to Phosphoserine. Residues 104 to 132 (KSSSAKKHEEEREKQEKEIDIYANLSDEK) adopt a coiled-coil conformation. Residues 109–119 (KKHEEEREKQE) are compositionally biased toward basic and acidic residues.

Belongs to the UPF0547 family.

This Mus musculus (Mouse) protein is UPF0547 protein C16orf87 homolog.